A 384-amino-acid polypeptide reads, in one-letter code: Cell division protein FtsZ (384 aa).

Residues 20 to 24 (GGGGN), 107 to 109 (GTG), Glu138, Arg142, and Asn186 each bind GTP.

This sequence belongs to the FtsZ family. As to quaternary structure, homodimer. Polymerizes to form a dynamic ring structure in a strictly GTP-dependent manner. Interacts directly with several other division proteins.

It is found in the cytoplasm. Essential cell division protein that forms a contractile ring structure (Z ring) at the future cell division site. The regulation of the ring assembly controls the timing and the location of cell division. One of the functions of the FtsZ ring is to recruit other cell division proteins to the septum to produce a new cell wall between the dividing cells. Binds GTP and shows GTPase activity. This chain is Cell division protein FtsZ, found in Buchnera aphidicola subsp. Schizaphis graminum (strain Sg).